We begin with the raw amino-acid sequence, 251 residues long: Aliphatic sulfonates import ATP-binding protein SsuB (251 aa).

The region spanning 3 to 231 (VSIDGVSKYF…PRSKTSESFQ (229 aa)) is the ABC transporter domain. Residue 39–46 (GPSGCGKS) coordinates ATP.

The protein belongs to the ABC transporter superfamily. Aliphatic sulfonates importer (TC 3.A.1.17.2) family. In terms of assembly, the complex is composed of two ATP-binding proteins (SsuB), two transmembrane proteins (SsuC) and a solute-binding protein (SsuA).

The protein localises to the cell membrane. It catalyses the reaction ATP + H2O + aliphatic sulfonate-[sulfonate-binding protein]Side 1 = ADP + phosphate + aliphatic sulfonateSide 2 + [sulfonate-binding protein]Side 1.. Part of the ABC transporter complex SsuABC involved in aliphatic sulfonates import. Responsible for energy coupling to the transport system. The sequence is that of Aliphatic sulfonates import ATP-binding protein SsuB from Bacillus cereus (strain ATCC 10987 / NRS 248).